Reading from the N-terminus, the 165-residue chain is MAPNASCLCVHVRSEEWDLMTFDANPYDSVKKIKEHVRSKTKVPVQDQVLLLGSKILKPRRSLSSYGIDKEKTIHLTLKVVKPSDEELPLFLVESGDEAKRHLLQVRRSSSVAQVKAMIETKTGIIPETQIVTCNGKRLEDGKMMADYGIRKGNLLFLACYCIGG.

Ubiquitin-like domains follow at residues 6–81 (SCLC…LKVV) and 90–163 (LFLV…CYCI).

The protein belongs to the ubiquitin D family. In terms of assembly, interacts directly with the 26S proteasome. Interacts with NUB1; this interaction facilitates the linking of UBD-conjugated target protein to the proteasome complex and accelerates its own degradation and that of its conjugates. Interacts (via ubiquitin-like 1 domain) with the spindle checkpoint protein MAD2L1 during mitosis. Present in aggresomes of proteasome inhibited cells. Interacts with HDAC6 under proteasome impairment conditions. Forms a thioester with UBA6 in cells stimulated with tumor necrosis factor-alpha (TNFa) and interferon-gamma (IFNg). Interacts with SQSTM1 and TP53/p53. Post-translationally, can be acetylated. Constitutively expressed in mature dendritic cells and B-cells. Mostly expressed in the reticuloendothelial system (e.g. thymus, spleen), the gastrointestinal system, kidney, lung and prostate gland.

Its subcellular location is the nucleus. It localises to the cytoplasm. Ubiquitin-like protein modifier which can be covalently attached to target proteins and subsequently leads to their degradation by the 26S proteasome, in a NUB1-dependent manner. Conjugation to the target protein is activated by UBA6 via adenylation of its C-terminal glycine. Promotes the expression of the proteasome subunit beta type-9 (PSMB9/LMP2). Regulates TNF-alpha-induced and LPS-mediated activation of the central mediator of innate immunity NF-kappa-B by promoting TNF-alpha-mediated proteasomal degradation of ubiquitinated-I-kappa-B-alpha. Required for TNF-alpha-induced p65 nuclear translocation in renal tubular epithelial cells (RTECs). May be involved in dendritic cell (DC) maturation, the process by which immature dendritic cells differentiate into fully competent antigen-presenting cells that initiate T-cell responses. Mediates mitotic non-disjunction and chromosome instability, in long-term in vitro culture and cancers, by abbreviating mitotic phase and impairing the kinetochore localization of MAD2L1 during the prometaphase stage of the cell cycle. May be involved in the formation of aggresomes when proteasome is saturated or impaired. Mediates apoptosis in a caspase-dependent manner, especially in renal epithelium and tubular cells during renal diseases such as polycystic kidney disease and Human immunodeficiency virus (HIV)-associated nephropathy (HIVAN). This chain is Ubiquitin D (UBD), found in Homo sapiens (Human).